Here is a 207-residue protein sequence, read N- to C-terminus: Probable flagellin 2 (207 aa).

A propeptide spanning residues 1 to 14 is cleaved from the precursor; the sequence is MRVGSRKLRRDEKG.

Belongs to the archaeal flagellin family.

It localises to the archaeal flagellum. Flagellin is the subunit protein which polymerizes to form the filaments of archaeal flagella. This is Probable flagellin 2 (flaB2) from Archaeoglobus fulgidus (strain ATCC 49558 / DSM 4304 / JCM 9628 / NBRC 100126 / VC-16).